The chain runs to 196 residues: Ribosome maturation factor RimP (196 aa).

Positions 164–196 (LAPQKPNKPGPKKPGHEKKKPSNESAAGKPRAE) are disordered. Residues 173-182 (GPKKPGHEKK) are compositionally biased toward basic residues.

This sequence belongs to the RimP family.

The protein resides in the cytoplasm. Required for maturation of 30S ribosomal subunits. In Xanthomonas euvesicatoria pv. vesicatoria (strain 85-10) (Xanthomonas campestris pv. vesicatoria), this protein is Ribosome maturation factor RimP.